The primary structure comprises 121 residues: UPF0295 protein BH0952 (121 aa).

The next 2 membrane-spanning stretches (helical) occupy residues 12–32 (IRTF…IGIF) and 41–61 (VLAM…YFWI).

This sequence belongs to the UPF0295 family.

The protein localises to the cell membrane. The chain is UPF0295 protein BH0952 from Halalkalibacterium halodurans (strain ATCC BAA-125 / DSM 18197 / FERM 7344 / JCM 9153 / C-125) (Bacillus halodurans).